Consider the following 298-residue polypeptide: 4-hydroxy-tetrahydrodipicolinate synthase (298 aa).

Threonine 48 provides a ligand contact to pyruvate. Residue tyrosine 137 is the Proton donor/acceptor of the active site. The active-site Schiff-base intermediate with substrate is the lysine 166. Residue isoleucine 207 coordinates pyruvate.

It belongs to the DapA family. In terms of assembly, homotetramer; dimer of dimers.

Its subcellular location is the cytoplasm. The enzyme catalyses L-aspartate 4-semialdehyde + pyruvate = (2S,4S)-4-hydroxy-2,3,4,5-tetrahydrodipicolinate + H2O + H(+). It functions in the pathway amino-acid biosynthesis; L-lysine biosynthesis via DAP pathway; (S)-tetrahydrodipicolinate from L-aspartate: step 3/4. Functionally, catalyzes the condensation of (S)-aspartate-beta-semialdehyde [(S)-ASA] and pyruvate to 4-hydroxy-tetrahydrodipicolinate (HTPA). In Campylobacter hominis (strain ATCC BAA-381 / DSM 21671 / CCUG 45161 / LMG 19568 / NCTC 13146 / CH001A), this protein is 4-hydroxy-tetrahydrodipicolinate synthase.